The sequence spans 84 residues: MERGRRKVRIGRVVSDKMDKTIVVAVEEFVRHPLYNKRVKRTKKFKAHDEKNICNIGDRVKIMETRPLSKDKRFRLVEVVEKVK.

Belongs to the universal ribosomal protein uS17 family. As to quaternary structure, part of the 30S ribosomal subunit.

One of the primary rRNA binding proteins, it binds specifically to the 5'-end of 16S ribosomal RNA. The protein is Small ribosomal subunit protein uS17 of Clostridioides difficile (strain 630) (Peptoclostridium difficile).